The following is a 751-amino-acid chain: Diamine oxidase [copper-containing] (751 aa).

The N-terminal stretch at 1–22 (MSLAFGWAAVILLLQTADTASA) is a signal peptide. 2 N-linked (GlcNAc...) asparagine glycosylation sites follow: asparagine 61 and asparagine 110. Catalysis depends on aspartate 373, which acts as the Proton acceptor. Cysteine 391 and cysteine 417 are disulfide-bonded. The active-site Schiff-base intermediate with substrate; via topaquinone is the tyrosine 461. Residue tyrosine 461 is modified to 2',4',5'-topaquinone. Cu(2+) contacts are provided by histidine 510 and histidine 512. Residues aspartate 519, leucine 520, and aspartate 521 each coordinate Ca(2+). Asparagine 538 is a glycosylation site (N-linked (GlcNAc...) asparagine). Ca(2+) contacts are provided by glutamate 562, phenylalanine 653, asparagine 656, glutamate 658, aspartate 664, and leucine 665. Histidine 675 contributes to the Cu(2+) binding site. Asparagine 745 carries N-linked (GlcNAc...) asparagine glycosylation.

The protein belongs to the copper/topaquinone oxidase family. Homodimer; disulfide-linked. Cu(2+) serves as cofactor. It depends on Ca(2+) as a cofactor. L-topaquinone is required as a cofactor. Topaquinone (TPQ) is generated by copper-dependent autoxidation of a specific tyrosyl residue. Post-translationally, N-glycosylated.

It is found in the secreted. The protein resides in the extracellular space. The protein localises to the cell membrane. It catalyses the reaction histamine + O2 + H2O = imidazole-4-acetaldehyde + H2O2 + NH4(+). The enzyme catalyses N(tau)-methylhistamine + O2 + H2O = 1-methylimidazole-4-acetaldehyde + H2O2 + NH4(+). It carries out the reaction putrescine + O2 + H2O = 4-aminobutanal + H2O2 + NH4(+). The catalysed reaction is cadaverine + O2 + H2O = 5-aminopentanal + H2O2 + NH4(+). Its activity is regulated as follows. Inhibited by amiloride and amiloride analogs. Functionally, catalyzes the oxidative deamination of primary amines to the corresponding aldehydes with the concomitant production of hydrogen peroxide and ammonia. Its preferred substrates in vitro are the diamines histamine and 1-methylhistamine and it could therefore play a role in allergic and immune responses. Has a broad specificity for diamines and can also act on cadaverine and putrescine, two products of amino acid catabolism. It could also act on polyamines, like spermidine and spermine though less efficiently, and regulate various biological processes. This Mus musculus (Mouse) protein is Diamine oxidase [copper-containing].